The chain runs to 202 residues: Nucleoside triphosphate pyrophosphatase (202 aa).

Asp79 functions as the Proton acceptor in the catalytic mechanism.

This sequence belongs to the Maf family. Requires a divalent metal cation as cofactor.

The protein localises to the cytoplasm. The enzyme catalyses a ribonucleoside 5'-triphosphate + H2O = a ribonucleoside 5'-phosphate + diphosphate + H(+). It carries out the reaction a 2'-deoxyribonucleoside 5'-triphosphate + H2O = a 2'-deoxyribonucleoside 5'-phosphate + diphosphate + H(+). In terms of biological role, nucleoside triphosphate pyrophosphatase. May have a dual role in cell division arrest and in preventing the incorporation of modified nucleotides into cellular nucleic acids. This Nitrobacter winogradskyi (strain ATCC 25391 / DSM 10237 / CIP 104748 / NCIMB 11846 / Nb-255) protein is Nucleoside triphosphate pyrophosphatase.